The following is a 450-amino-acid chain: Interferon regulatory factor 4 (450 aa).

The IRF tryptophan pentad repeat DNA-binding region spans 21 to 129 (NGKLRQWLID…DPYKVYRIVP (109 aa)). 2 positions are modified to phosphoserine; by ROCK2: serine 446 and serine 447.

It belongs to the IRF family. Interacts with SPIB and DEF6. Interacts with the BATF-JUNB heterodimer. Interacts with BATF (via bZIP domain); the interaction is direct. Directly interacts with NLRP3 in the nucleus of Th2 cells; this interaction enhances IRF4 ability to bind to the IL4 promoter and is required for optimal IRF4-dependent IL4 transcription. Interacts with SPI1. In terms of processing, phosphorylation by ROCK2 regulates IL-17 and IL-21 production. As to expression, lymphoid cells.

It localises to the nucleus. Its subcellular location is the cytoplasm. Functionally, transcriptional activator. Binds to the interferon-stimulated response element (ISRE) of the MHC class I promoter. Binds the immunoglobulin lambda light chain enhancer, together with PU.1. Probably plays a role in ISRE-targeted signal transduction mechanisms specific to lymphoid cells. Involved in CD8(+) dendritic cell differentiation by forming a complex with the BATF-JUNB heterodimer in immune cells, leading to recognition of AICE sequence (5'-TGAnTCA/GAAA-3'), an immune-specific regulatory element, followed by cooperative binding of BATF and IRF4 and activation of genes. This Mus musculus (Mouse) protein is Interferon regulatory factor 4.